The sequence spans 26 residues: uncharacterized protein (26 aa).

It is found in the plastid. Its subcellular location is the chloroplast. This is an uncharacterized protein from Trieres chinensis (Marine centric diatom).